We begin with the raw amino-acid sequence, 325 residues long: Tagatose 1,6-diphosphate aldolase (325 aa).

The protein belongs to the aldolase LacD family.

The enzyme catalyses D-tagatofuranose 1,6-bisphosphate = D-glyceraldehyde 3-phosphate + dihydroxyacetone phosphate. Its pathway is carbohydrate metabolism; D-tagatose 6-phosphate degradation; D-glyceraldehyde 3-phosphate and glycerone phosphate from D-tagatose 6-phosphate: step 2/2. The chain is Tagatose 1,6-diphosphate aldolase from Staphylococcus epidermidis (strain ATCC 35984 / DSM 28319 / BCRC 17069 / CCUG 31568 / BM 3577 / RP62A).